Here is a 107-residue protein sequence, read N- to C-terminus: Thioredoxin-1 (107 aa).

Residues 2 to 106 (ASVRTMTDFH…LTNMMAKLVK (105 aa)) form the Thioredoxin domain. Residues C31 and C34 each act as nucleophile in the active site. C31 and C34 are disulfide-bonded.

The protein belongs to the thioredoxin family.

It localises to the nucleus. In terms of biological role, participates in various redox reactions through the reversible oxidation of its active center dithiol to a disulfide and catalyzes dithiol-disulfide exchange reactions. As a reducing substrate of peroxiredoxin 1, thioredoxin 2 is preferred over thioredoxin 1. Required for female meiosis and early embryonic development. In Drosophila yakuba (Fruit fly), this protein is Thioredoxin-1 (dhd).